Consider the following 132-residue polypeptide: Small ribosomal subunit protein uS8c (132 aa).

This sequence belongs to the universal ribosomal protein uS8 family. In terms of assembly, part of the 30S ribosomal subunit.

It localises to the plastid. The protein localises to the chloroplast. One of the primary rRNA binding proteins, it binds directly to 16S rRNA central domain where it helps coordinate assembly of the platform of the 30S subunit. This Adiantum capillus-veneris (Maidenhair fern) protein is Small ribosomal subunit protein uS8c (rps8).